The following is a 194-amino-acid chain: 7-methyl-GTP pyrophosphatase (194 aa).

D69 acts as the Proton acceptor in catalysis.

It belongs to the Maf family. YceF subfamily. A divalent metal cation is required as a cofactor.

Its subcellular location is the cytoplasm. The enzyme catalyses N(7)-methyl-GTP + H2O = N(7)-methyl-GMP + diphosphate + H(+). In terms of biological role, nucleoside triphosphate pyrophosphatase that hydrolyzes 7-methyl-GTP (m(7)GTP). May have a dual role in cell division arrest and in preventing the incorporation of modified nucleotides into cellular nucleic acids. This Salmonella paratyphi A (strain ATCC 9150 / SARB42) protein is 7-methyl-GTP pyrophosphatase (yceF1).